Consider the following 729-residue polypeptide: Leucine-rich repeat flightless-interacting protein 1 (729 aa).

Thr-2 is modified (N-acetylthreonine). At Ser-16 the chain carries Phosphoserine. The span at 40–65 (IRMKELERQQKEVEERPDKDFAEKGS) shows a compositional bias: basic and acidic residues. The tract at residues 40–98 (IRMKELERQQKEVEERPDKDFAEKGSRNMPSLSAATLASLGGTSSRRGSGDTSISMDTE) is disordered. Residues 78–94 (SLGGTSSRRGSGDTSIS) show a composition bias toward low complexity. Residues Ser-83, Ser-84, Ser-88, Asp-90, Ser-92, and Thr-97 each carry the phosphoserine modification. Residues 94–194 (SMDTEASIRE…LRQREEMLEK (101 aa)) adopt a coiled-coil conformation. Lys-249 participates in a covalent cross-link: Glycyl lysine isopeptide (Lys-Gly) (interchain with G-Cter in SUMO1). Positions 253 to 729 (VEKVGQRETL…SKSKEDCTMS (477 aa)) are disordered. Positions 260–272 (ETLQNSEQEQPKP) are enriched in polar residues. Basic and acidic residues predominate over residues 277-297 (DCVDRGVSHPGEKAENQRPAE). Ser-302 carries the phosphoserine modification. Positions 313–326 (QQVQSQDQENTSDL) are enriched in polar residues. Positions 327–343 (KNSEQIESHKVTNKSDS) are enriched in basic and acidic residues. Residues 344–354 (RASNSPEQSSC) are compositionally biased toward polar residues. Ser-346 and Ser-348 each carry phosphoserine. 2 stretches are compositionally biased toward basic and acidic residues: residues 435–445 (KGTENHGESCL) and 482–494 (KADD…EKPI). Residues 465–567 (EEAIVQIPQA…KNKKKKAATP (103 aa)) form a DNA-binding region. Positions 506 to 523 (INQSGHQDTTGPGSTDAQ) are enriched in polar residues. Ser-538 and Ser-547 each carry phosphoserine. Over residues 550–564 (KKTKNKKKKNKKKKA) the composition is skewed to basic residues. Over residues 608 to 618 (QKIRAGSREPV) the composition is skewed to basic and acidic residues. Residues Ser-614 and Ser-670 each carry the phosphoserine modification. 2 stretches are compositionally biased toward polar residues: residues 667 to 684 (CDTS…SQHG) and 693 to 710 (LDNS…SESG). A compositionally biased stretch (basic and acidic residues) spans 713-729 (AREEVGNSKSKEDCTMS).

This sequence belongs to the LRRFIP family. As to quaternary structure, homodimer. May also form higher oligomers. Interacts with FLII. Interacts with MYD88. Competes with FLII for MyD88-binding, even in the absence of LPS. Ubiquitously expressed.

Its subcellular location is the nucleus. The protein resides in the cytoplasm. Its function is as follows. Transcriptional repressor which preferentially binds to the GC-rich consensus sequence (5'-AGCCCCCGGCG-3') and may regulate expression of TNF, EGFR and PDGFA. May control smooth muscle cells proliferation following artery injury through PDGFA repression. May also bind double-stranded RNA. Positively regulates Toll-like receptor (TLR) signaling in response to agonist probably by competing with the negative FLII regulator for MYD88-binding. The protein is Leucine-rich repeat flightless-interacting protein 1 (Lrrfip1) of Mus musculus (Mouse).